Consider the following 261-residue polypeptide: Proteasome subunit alpha type-4 (261 aa).

Phosphoserine is present on residues Ser13 and Ser75. The residue at position 127 (Lys127) is an N6-acetyllysine. Ser173 carries the post-translational modification Phosphoserine. The residue at position 176 (Lys176) is an N6-acetyllysine. The segment at 240–261 (HEEEEAKAEREKKEKEQKEKDK) is disordered.

The protein belongs to the peptidase T1A family. The 26S proteasome consists of a 20S proteasome core and two 19S regulatory subunits. The 20S proteasome core is a barrel-shaped complex made of 28 subunits that are arranged in four stacked rings. The two outer rings are each formed by seven alpha subunits, and the two inner rings are formed by seven beta subunits. The proteolytic activity is exerted by three beta-subunits PSMB5, PSMB6 and PSMB7.

The protein resides in the cytoplasm. It localises to the nucleus. Component of the 20S core proteasome complex involved in the proteolytic degradation of most intracellular proteins. This complex plays numerous essential roles within the cell by associating with different regulatory particles. Associated with two 19S regulatory particles, forms the 26S proteasome and thus participates in the ATP-dependent degradation of ubiquitinated proteins. The 26S proteasome plays a key role in the maintenance of protein homeostasis by removing misfolded or damaged proteins that could impair cellular functions, and by removing proteins whose functions are no longer required. Associated with the PA200 or PA28, the 20S proteasome mediates ubiquitin-independent protein degradation. This type of proteolysis is required in several pathways including spermatogenesis (20S-PA200 complex) or generation of a subset of MHC class I-presented antigenic peptides (20S-PA28 complex). The chain is Proteasome subunit alpha type-4 (PSMA4) from Macaca fascicularis (Crab-eating macaque).